The primary structure comprises 265 residues: MTIRIVIAGPRGRMGREAVALVQRTDHFELAAVIDRRYDGQNLADIDGFAGIDAPIYTDAVRCFTEVKPDVLIDLTTPEVGKRHAELALRYGVRPVIGTTGFTPEDIERLTELAETNEIGAIIAPNFAVGAVLMMKFARMAAKYFTDVEIIELHHDQKLDAPSGTALKTAQLIAEVRPSKKQGHPDEKETLAGARGAAYDGIPIHSVRLPGFVAHQEVIFGGEGQTLTIRHDSLDRRSFMSGVKLAVETVMHLHTLVYGLEHILE.

Residue 9–14 (GPRGRM) coordinates NAD(+). Arg-37 contacts NADP(+). Residues 98 to 100 (GTT) and 124 to 127 (APNF) each bind NAD(+). His-154 acts as the Proton donor/acceptor in catalysis. His-155 contributes to the (S)-2,3,4,5-tetrahydrodipicolinate binding site. Lys-158 functions as the Proton donor in the catalytic mechanism. Position 164–165 (164–165 (GT)) interacts with (S)-2,3,4,5-tetrahydrodipicolinate.

This sequence belongs to the DapB family.

It is found in the cytoplasm. The catalysed reaction is (S)-2,3,4,5-tetrahydrodipicolinate + NAD(+) + H2O = (2S,4S)-4-hydroxy-2,3,4,5-tetrahydrodipicolinate + NADH + H(+). It catalyses the reaction (S)-2,3,4,5-tetrahydrodipicolinate + NADP(+) + H2O = (2S,4S)-4-hydroxy-2,3,4,5-tetrahydrodipicolinate + NADPH + H(+). It participates in amino-acid biosynthesis; L-lysine biosynthesis via DAP pathway; (S)-tetrahydrodipicolinate from L-aspartate: step 4/4. Its function is as follows. Catalyzes the conversion of 4-hydroxy-tetrahydrodipicolinate (HTPA) to tetrahydrodipicolinate. This Geobacillus thermodenitrificans (strain NG80-2) protein is 4-hydroxy-tetrahydrodipicolinate reductase.